Here is a 356-residue protein sequence, read N- to C-terminus: Cytochrome c oxidase subunit 2 (356 aa).

The signal sequence occupies residues Met-1 to Gly-20. Cys-21 carries N-palmitoyl cysteine lipidation. The S-diacylglycerol cysteine moiety is linked to residue Cys-21. Over Cys-21–Thr-47 the chain is Extracellular. The cytochrome c oxidase subunit II stretch occupies residues Cys-21–Asp-257. Residues Leu-48–Val-66 form a helical membrane-spanning segment. Topologically, residues Arg-67 to Phe-87 are cytoplasmic. Residues Leu-88–Pro-106 traverse the membrane as a helical segment. Topologically, residues Val-107–Lys-356 are extracellular. Residues His-176, Cys-217, Cys-221, and His-225 each contribute to the Cu cation site. One can recognise a Cytochrome c domain in the interval Leu-258–Lys-356. The heme c site is built by Cys-271, Cys-274, His-275, and Met-329.

It belongs to the cytochrome c oxidase subunit 2 family. Cu cation serves as cofactor. Heme c is required as a cofactor.

It is found in the cell membrane. It carries out the reaction 4 Fe(II)-[cytochrome c] + O2 + 8 H(+)(in) = 4 Fe(III)-[cytochrome c] + 2 H2O + 4 H(+)(out). Functionally, subunits I and II form the functional core of the enzyme complex. Electrons originating in cytochrome c are transferred via heme a and Cu(A) to the binuclear center formed by heme a3 and Cu(B). In Bacillus subtilis (strain 168), this protein is Cytochrome c oxidase subunit 2 (ctaC).